Here is a 146-residue protein sequence, read N- to C-terminus: Large ribosomal subunit protein uL13 (146 aa).

Belongs to the universal ribosomal protein uL13 family. Part of the 50S ribosomal subunit.

In terms of biological role, this protein is one of the early assembly proteins of the 50S ribosomal subunit, although it is not seen to bind rRNA by itself. It is important during the early stages of 50S assembly. In Spiroplasma citri, this protein is Large ribosomal subunit protein uL13.